The primary structure comprises 371 residues: Forkhead box protein E1 (371 aa).

Residues 21–53 (EERGEAAAAGAGVPAEAAGRGAGGRRRKRPLQR) are disordered. Over residues 26–39 (AAAAGAGVPAEAAG) the composition is skewed to low complexity. Residues 43 to 52 (GGRRRKRPLQ) are compositionally biased toward basic residues. Positions 55-149 (KPPYSYIALI…ESGSFLRRRK (95 aa)) form a DNA-binding region, fork-head.

Phosphorylated. In terms of tissue distribution, expressed in Rathke pouch, in thyroid, and in the epithelium of the pharyngeal wall and arches, whereas it is absent in the epithelium of the pharyngeal pouches.

Its subcellular location is the nucleus. Functionally, transcription factor that binds consensus sites on a variety of gene promoters and activate their transcription. Involved in proper palate formation, most probably through the expression of MSX1 and TGFB3 genes which are direct targets of this transcription factor. Also implicated in thyroid gland morphogenesis. May indirectly play a role in cell growth and migration through the regulation of WNT5A expression. The chain is Forkhead box protein E1 (Foxe1) from Mus musculus (Mouse).